Here is a 2919-residue protein sequence, read N- to C-terminus: Cadherin EGF LAG seven-pass G-type receptor 2 (2919 aa).

The N-terminal stretch at 1-31 is a signal peptide; the sequence is MRSRAASAPLPTPLLPLLLLLLLLPPSPLLG. At 32 to 2380 the chain is on the extracellular side; sequence DQVGPCRSLG…GEILPLKTLT (2349 aa). Residues 156–194 form a disordered region; sequence LRAGEGSPEESLGGRRKRNVNTAPQFQPPSYQATVPENQ. Over residues 175-194 the composition is skewed to polar residues; that stretch reads VNTAPQFQPPSYQATVPENQ. 9 consecutive Cadherin domains span residues 182-289, 290-399, 400-505, 506-610, 611-712, 713-815, 816-921, 922-1023, and 1028-1146; these read QPPS…DPVF, EQQE…APQF, SEKR…APIF, VSTP…NPTF, TQPE…RPVF, QSSH…APQF, LRDS…PPVF, EQDE…PPVL, and ILFN…SPLL. N-linked (GlcNAc...) asparagine glycosylation is found at N486, N557, and N701. Residues N1036, N1076, N1182, and N1212 are each glycosylated (N-linked (GlcNAc...) asparagine). Residues 1228–1286 enclose the EGF-like 1; atypical domain; sequence DDNICLREPCENYMRCVSVLRFDSSAPFIASSSVLFRPIHPVGGLRCRCPPGFTGDYCE. An EGF-like 2; calcium-binding domain is found at 1288-1318; sequence EVDLCYSRPCGPHGRCRSREGGYTCLCLDGY. 6 disulfides stabilise this stretch: C1292–C1303, C1297–C1312, C1314–C1323, C1332–C1343, C1337–C1353, and C1355–C1365. The 39-residue stretch at 1328-1366 folds into the EGF-like 3; calcium-binding domain; that stretch reads HSGRCTPGVCKNGGTCVNLLVGGFKCDCPSGDFEKPFCQ. A Laminin G-like 1 domain is found at 1367–1571; the sequence is VTTRSFPARS…IANNGTVPGC (205 aa). N-linked (GlcNAc...) asparagine glycans are attached at residues N1501 and N1565. Cystine bridges form between C1545-C1571, C1578-C1589, C1583-C1598, and C1600-C1609. One can recognise an EGF-like 4; calcium-binding domain in the interval 1574–1610; it reads KKIVCDSSICHNGGTCVNQWNAFSCECPLGFGGKSCA. N1591 carries the post-translational modification (3R)-3-hydroxyasparagine. In terms of domain architecture, Laminin G-like 2 spans 1614–1791; the sequence is ANPQRFLGSS…GESINVEPGC (178 aa). N-linked (GlcNAc...) asparagine glycosylation is present at N1741. The EGF-like 5; calcium-binding domain maps to 1787–1829; that stretch reads VEPGCSWPDPCDSNPCPTNSYCSNDWDSYSCSCVLGYYGDNCT. 13 disulfide bridges follow: C1791-C1802, C1797-C1817, C1819-C1828, C1832-C1843, C1837-C1855, C1857-C1866, C1887-C1899, C1889-C1906, C1908-C1921, C1924-C1936, C1926-C1943, C1945-C1954, and C1957-C1969. N1827 carries an N-linked (GlcNAc...) asparagine glycan. One can recognise an EGF-like 6; calcium-binding domain in the interval 1830–1867; sequence NVCDLNPCEHQSVCTRKPNTPHGYICECLPNYLGPYCE. The region spanning 1883–1922 is the EGF-like 7; calcium-binding domain; sequence TCGPCNCDVSKGFDPDCNKTSGECHCKENHYRPPGSPTCL. N-linked (GlcNAc...) asparagine glycosylation occurs at N1900. In terms of domain architecture, Laminin EGF-like spans 1924–1971; it reads CDCYPTGSLSRVCDPEDGQCPCKPGVIGRQCDRCDNPFAEVTTNGCEV. 3 N-linked (GlcNAc...) asparagine glycosylation sites follow: N2024, N2043, and N2061. A GAIN-B domain is found at 2199-2369; sequence ETTVILPESV…AVLMDMSRRE (171 aa). Residues 2216–2241 are disordered; that stretch reads VRSAGPGEAQETEELARRQRRHPELS. Disulfide bonds link C2319-C2351 and C2339-C2353. Residues 2319 to 2369 form a GPS region; that stretch reads CVFWNHSILVSGTGGWSARGCEVVFRNESHVSCQCNHMTSFAVLMDMSRRE. Residues N2323 and N2345 are each glycosylated (N-linked (GlcNAc...) asparagine). Residues 2381–2401 form a helical membrane-spanning segment; the sequence is YVALGVTLAALMLTFLFLTLL. The Cytoplasmic segment spans residues 2402-2413; the sequence is RALRSNQHGIRR. The chain crosses the membrane as a helical span at residues 2414–2433; the sequence is NLTAALGLAQLVFLLGINQA. Residues 2434–2438 are Extracellular-facing; it reads DLPFA. A helical transmembrane segment spans residues 2439–2459; the sequence is CTVIAILLHFLYLCTFSWALL. At 2460 to 2480 the chain is on the cytoplasmic side; sequence EALHLYRALTEVRDVNASPMR. The helical transmembrane segment at 2481-2501 threads the bilayer; it reads FYYMLGWGVPAFITGLAVGLD. The Extracellular portion of the chain corresponds to 2502–2518; that stretch reads PEGYGNPDFCWLSVYDT. Residues 2519 to 2539 traverse the membrane as a helical segment; sequence LIWSFAGPVAFAVSMSVFLYI. Residues 2540–2563 are Cytoplasmic-facing; the sequence is LSARASCAAQRQGFEKKGPVSGLR. Residues 2564 to 2584 form a helical membrane-spanning segment; it reads SSFTVLLLLSATWLLALLSVN. Over 2585–2591 the chain is Extracellular; the sequence is SDTLLFH. The helical transmembrane segment at 2592–2612 threads the bilayer; sequence YLFAACNCVQGPFIFLSYVVL. Residues 2613–2919 lie on the Cytoplasmic side of the membrane; that stretch reads SKEVRKALKF…SEFLFFNFLH (307 aa). The interval 2690-2884 is disordered; it reads LNPGQVPPGL…PPRPPPRQSL (195 aa). Residues 2718–2730 are compositionally biased toward acidic residues; it reads TDSDSDLSLEDDQ. Residues 2791–2800 are compositionally biased toward polar residues; it reads GTTTKENSGS. A compositionally biased stretch (basic and acidic residues) spans 2803–2815; it reads LEERPRENGDALT. Over residues 2857–2868 the composition is skewed to low complexity; the sequence is GTGSSRGSSISE.

This sequence belongs to the G-protein coupled receptor 2 family. LN-TM7 subfamily. Heterodimer of 2 chains generated by proteolytic processing; the large extracellular N-terminal fragment and the membrane-bound C-terminal fragment predominantly remain associated and non-covalently linked. Post-translationally, the iron and 2-oxoglutarate dependent 3-hydroxylation of aspartate and asparagine is (R) stereospecific within EGF domains. Autoproteolytically processed at the GPS region of the GAIN-B domain; this cleavage modulates receptor activity. Expressed in the CNS and in the eye.

It is found in the cell membrane. Functionally, receptor that may have an important role in cell/cell signaling during nervous system formation. In Mus musculus (Mouse), this protein is Cadherin EGF LAG seven-pass G-type receptor 2.